The sequence spans 167 residues: RNA pyrophosphohydrolase (167 aa).

Positions 7–160 (PYRPCVGVMV…KRRAYEEVVA (154 aa)) constitute a Nudix hydrolase domain. Positions 48–69 (GGIDEGEDPLEAACRELYEETG) match the Nudix box motif.

Belongs to the Nudix hydrolase family. RppH subfamily. Requires a divalent metal cation as cofactor.

Functionally, accelerates the degradation of transcripts by removing pyrophosphate from the 5'-end of triphosphorylated RNA, leading to a more labile monophosphorylated state that can stimulate subsequent ribonuclease cleavage. The protein is RNA pyrophosphohydrolase of Rhizobium meliloti (strain 1021) (Ensifer meliloti).